A 476-amino-acid chain; its full sequence is UDP-N-acetylmuramoylalanine--D-glutamate ligase (476 aa).

Residue glycine 122–threonine 128 participates in ATP binding.

It belongs to the MurCDEF family.

Its subcellular location is the cytoplasm. The enzyme catalyses UDP-N-acetyl-alpha-D-muramoyl-L-alanine + D-glutamate + ATP = UDP-N-acetyl-alpha-D-muramoyl-L-alanyl-D-glutamate + ADP + phosphate + H(+). Its pathway is cell wall biogenesis; peptidoglycan biosynthesis. Its function is as follows. Cell wall formation. Catalyzes the addition of glutamate to the nucleotide precursor UDP-N-acetylmuramoyl-L-alanine (UMA). This is UDP-N-acetylmuramoylalanine--D-glutamate ligase from Psychrobacter arcticus (strain DSM 17307 / VKM B-2377 / 273-4).